The following is a 306-amino-acid chain: Protoheme IX farnesyltransferase (306 aa).

Transmembrane regions (helical) follow at residues 31–50, 55–77, 104–124, 125–145, 168–188, 218–235, 238–258, and 286–306; these read VIELLLVTTAPVMILAQGGW, LILGVLVGGTLSAGSANAFNCYI, LVFAWIIGVASIIWLGVISNW, LAAALSLAAILFYVFVYTLWL, WAAVTGDISWAPVILFMIVFL, GRAAVGLQTILYSWATLA, LLLIPVAGMGLVYTLAALAGG, and ASISYLSLLFLAVGIDPLLPF.

This sequence belongs to the UbiA prenyltransferase family. Protoheme IX farnesyltransferase subfamily.

The protein resides in the cell membrane. It carries out the reaction heme b + (2E,6E)-farnesyl diphosphate + H2O = Fe(II)-heme o + diphosphate. Its pathway is porphyrin-containing compound metabolism; heme O biosynthesis; heme O from protoheme: step 1/1. Its function is as follows. Converts heme B (protoheme IX) to heme O by substitution of the vinyl group on carbon 2 of heme B porphyrin ring with a hydroxyethyl farnesyl side group. The sequence is that of Protoheme IX farnesyltransferase from Clavibacter sepedonicus (Clavibacter michiganensis subsp. sepedonicus).